Reading from the N-terminus, the 3471-residue chain is Genome polyprotein (3471 aa).

Positions 513 to 603 (EVQDALEKSM…RADIDALKKK (91 aa)) form a coiled coil. 2 disordered regions span residues 603-639 (KPAQSVTPLPSPSGNSGTAGEQRPPPRRRPPVVEMSE) and 1271-1307 (NKTTYLADEQPTTSAPRTSTVDTEEDPPTEGEIARTS). Polar residues-rich tracts occupy residues 606–621 (QSVTPLPSPSGNSGTA) and 1271–1291 (NKTTYLADEQPTTSAPRTSTV). 2 helical membrane passes run 1493 to 1513 (DKWIWAALASILVGAALLHYY) and 1592 to 1612 (MSSLLTILSVVASLVMWGKIP). The 167-residue stretch at 1748–1914 (LELMNESYTY…PDVPKNEANP (167 aa)) folds into the SF3 helicase domain. 1774-1781 (GAPGVGKS) is a binding site for ATP. A helical membrane pass occupies residues 2360–2380 (ILLAIGASVAVAGVAVGAVIL). Acidic residues predominate over residues 2391 to 2401 (EDEEIEGEEGE). Disordered stretches follow at residues 2391-2411 (EDEEIEGEEGETQASGAHESD) and 2435-2460 (VAEAHEEKSTEKPRKPGNPTRKNFLG). Positions 2435–2448 (VAEAHEEKSTEKPR) are enriched in basic and acidic residues. Residues 2629–2847 (GVDRDLSMTN…YAETLTQEHL (219 aa)) form the Peptidase C3 domain. Active-site for picornain 3C-like protease activity residues include His-2677, Glu-2714, and Cys-2808. The region spanning 3152 to 3283 (TKGFAGDYSK…SVHEEFLDVY (132 aa)) is the RdRp catalytic domain.

In terms of processing, specific enzymatic cleavages by picornain 3C-like protease in vivo yield mature proteins. Picornain 3C-like protease is autocatalytically processed.

The protein resides in the virion. The protein localises to the host membrane. The catalysed reaction is RNA(n) + a ribonucleoside 5'-triphosphate = RNA(n+1) + diphosphate. In terms of biological role, picornain 3C-like protease is a thiol protease that probably cleaves the polyprotein. The chain is Genome polyprotein from Oryza sativa (Rice).